The chain runs to 301 residues: Aquaporin NIP2-3 (301 aa).

2 helical membrane-spanning segments follow: residues 57–77 (VISEVVATFLLVFVTCGAASI) and 91–111 (SVAGGLIVTVMIYATGHISGA). The short motif at 114–116 (NPA) is the NPA 1 element. Helical transmembrane passes span 132 to 154 (VPFYWAAQFTGAMCAAFVLKAVL), 172 to 192 (ALAIEIVVTFNMMFVTCAVAT), and 200 to 220 (LAGLAVGSAVCITSIFAGPVS). Residues 225–227 (NPA) carry the NPA 2 motif. A helical membrane pass occupies residues 238–258 (VFTGLWIYFLGPVVGTLSGAW).

Belongs to the MIP/aquaporin (TC 1.A.8) family. NIP (TC 1.A.8.12) subfamily.

Its subcellular location is the membrane. In terms of biological role, aquaporins facilitate the transport of water and small neutral solutes across cell membranes. The sequence is that of Aquaporin NIP2-3 (NIP2-3) from Zea mays (Maize).